Reading from the N-terminus, the 368-residue chain is Phospho-N-acetylmuramoyl-pentapeptide-transferase (368 aa).

9 helical membrane-spanning segments follow: residues 30 to 50, 72 to 92, 98 to 118, 139 to 159, 170 to 190, 201 to 221, 238 to 258, 262 to 284, and 345 to 365; these read AAAI…IRFL, VPTM…LLWA, HVWL…IDDY, VALG…SVLL, FSVD…TAVS, GLAA…AYLG, AGEI…FLWF, PAEV…VIAL, and KIVI…LMTL.

Belongs to the glycosyltransferase 4 family. MraY subfamily. Mg(2+) serves as cofactor.

The protein localises to the cell inner membrane. It carries out the reaction UDP-N-acetyl-alpha-D-muramoyl-L-alanyl-gamma-D-glutamyl-meso-2,6-diaminopimeloyl-D-alanyl-D-alanine + di-trans,octa-cis-undecaprenyl phosphate = di-trans,octa-cis-undecaprenyl diphospho-N-acetyl-alpha-D-muramoyl-L-alanyl-D-glutamyl-meso-2,6-diaminopimeloyl-D-alanyl-D-alanine + UMP. It functions in the pathway cell wall biogenesis; peptidoglycan biosynthesis. Catalyzes the initial step of the lipid cycle reactions in the biosynthesis of the cell wall peptidoglycan: transfers peptidoglycan precursor phospho-MurNAc-pentapeptide from UDP-MurNAc-pentapeptide onto the lipid carrier undecaprenyl phosphate, yielding undecaprenyl-pyrophosphoryl-MurNAc-pentapeptide, known as lipid I. The sequence is that of Phospho-N-acetylmuramoyl-pentapeptide-transferase from Chlorobaculum parvum (strain DSM 263 / NCIMB 8327) (Chlorobium vibrioforme subsp. thiosulfatophilum).